The sequence spans 24 residues: Brevinin-1R (24 aa).

The cysteines at positions 18 and 24 are disulfide-linked.

As to expression, expressed by the skin glands.

Its subcellular location is the secreted. In terms of biological role, antimicrobial peptide. This chain is Brevinin-1R, found in Pelophylax ridibundus (Marsh frog).